Consider the following 226-residue polypeptide: PKHD-type hydroxylase Plav_0377 (226 aa).

Residues 78–178 form the Fe2OG dioxygenase domain; that stretch reads KVLPPRFNRY…RLASFFWVQS (101 aa). 3 residues coordinate Fe cation: His-96, Asp-98, and His-159. Residue Arg-169 coordinates 2-oxoglutarate.

The cofactor is Fe(2+). It depends on L-ascorbate as a cofactor.

The chain is PKHD-type hydroxylase Plav_0377 from Parvibaculum lavamentivorans (strain DS-1 / DSM 13023 / NCIMB 13966).